Reading from the N-terminus, the 416-residue chain is Imidazolonepropionase (416 aa).

H78 and H80 together coordinate Fe(3+). Zn(2+)-binding residues include H78 and H80. 4-imidazolone-5-propanoate-binding residues include R87, Y150, and H183. Residue Y150 coordinates N-formimidoyl-L-glutamate. H248 is a Fe(3+) binding site. H248 contributes to the Zn(2+) binding site. Q251 provides a ligand contact to 4-imidazolone-5-propanoate. Residue D323 coordinates Fe(3+). A Zn(2+)-binding site is contributed by D323. Positions 325 and 327 each coordinate N-formimidoyl-L-glutamate. T328 lines the 4-imidazolone-5-propanoate pocket.

This sequence belongs to the metallo-dependent hydrolases superfamily. HutI family. Zn(2+) serves as cofactor. Fe(3+) is required as a cofactor.

It is found in the cytoplasm. It catalyses the reaction 4-imidazolone-5-propanoate + H2O = N-formimidoyl-L-glutamate. The protein operates within amino-acid degradation; L-histidine degradation into L-glutamate; N-formimidoyl-L-glutamate from L-histidine: step 3/3. Functionally, catalyzes the hydrolytic cleavage of the carbon-nitrogen bond in imidazolone-5-propanoate to yield N-formimidoyl-L-glutamate. It is the third step in the universal histidine degradation pathway. In Vibrio campbellii (strain ATCC BAA-1116), this protein is Imidazolonepropionase.